The following is a 153-amino-acid chain: Transcriptional regulator MraZ (153 aa).

SpoVT-AbrB domains are found at residues 7–61 (KEKH…LPDV) and 90–133 (LEMV…EPGR).

The protein belongs to the MraZ family. As to quaternary structure, forms oligomers.

It localises to the cytoplasm. Its subcellular location is the nucleoid. This is Transcriptional regulator MraZ from Chlorobium luteolum (strain DSM 273 / BCRC 81028 / 2530) (Pelodictyon luteolum).